A 241-amino-acid polypeptide reads, in one-letter code: Uracil-DNA glycosylase (241 aa).

Aspartate 71 serves as the catalytic Proton acceptor.

The protein belongs to the uracil-DNA glycosylase (UDG) superfamily. UNG family.

The protein resides in the cytoplasm. It carries out the reaction Hydrolyzes single-stranded DNA or mismatched double-stranded DNA and polynucleotides, releasing free uracil.. Functionally, excises uracil residues from the DNA which can arise as a result of misincorporation of dUMP residues by DNA polymerase or due to deamination of cytosine. In Xanthomonas euvesicatoria pv. vesicatoria (strain 85-10) (Xanthomonas campestris pv. vesicatoria), this protein is Uracil-DNA glycosylase.